We begin with the raw amino-acid sequence, 89 residues long: Small ribosomal subunit protein uS15 (89 aa).

This sequence belongs to the universal ribosomal protein uS15 family. Part of the 30S ribosomal subunit. Forms a bridge to the 50S subunit in the 70S ribosome, contacting the 23S rRNA.

Functionally, one of the primary rRNA binding proteins, it binds directly to 16S rRNA where it helps nucleate assembly of the platform of the 30S subunit by binding and bridging several RNA helices of the 16S rRNA. Forms an intersubunit bridge (bridge B4) with the 23S rRNA of the 50S subunit in the ribosome. The protein is Small ribosomal subunit protein uS15 of Streptococcus suis (strain 98HAH33).